The chain runs to 208 residues: Small ribosomal subunit protein uS4 (208 aa).

In terms of domain architecture, S4 RNA-binding spans 98–160 (CRLDNVVYRM…AKKQSRIQLA (63 aa)).

Belongs to the universal ribosomal protein uS4 family. Part of the 30S ribosomal subunit. Contacts protein S5. The interaction surface between S4 and S5 is involved in control of translational fidelity.

In terms of biological role, one of the primary rRNA binding proteins, it binds directly to 16S rRNA where it nucleates assembly of the body of the 30S subunit. With S5 and S12 plays an important role in translational accuracy. In Ruthia magnifica subsp. Calyptogena magnifica, this protein is Small ribosomal subunit protein uS4.